Here is a 181-residue protein sequence, read N- to C-terminus: ATP synthase subunit delta (181 aa).

Belongs to the ATPase delta chain family. As to quaternary structure, F-type ATPases have 2 components, F(1) - the catalytic core - and F(0) - the membrane proton channel. F(1) has five subunits: alpha(3), beta(3), gamma(1), delta(1), epsilon(1). F(0) has three main subunits: a(1), b(2) and c(10-14). The alpha and beta chains form an alternating ring which encloses part of the gamma chain. F(1) is attached to F(0) by a central stalk formed by the gamma and epsilon chains, while a peripheral stalk is formed by the delta and b chains.

The protein resides in the cell inner membrane. Its function is as follows. F(1)F(0) ATP synthase produces ATP from ADP in the presence of a proton or sodium gradient. F-type ATPases consist of two structural domains, F(1) containing the extramembraneous catalytic core and F(0) containing the membrane proton channel, linked together by a central stalk and a peripheral stalk. During catalysis, ATP synthesis in the catalytic domain of F(1) is coupled via a rotary mechanism of the central stalk subunits to proton translocation. This protein is part of the stalk that links CF(0) to CF(1). It either transmits conformational changes from CF(0) to CF(1) or is implicated in proton conduction. This chain is ATP synthase subunit delta, found in Chlorobaculum parvum (strain DSM 263 / NCIMB 8327) (Chlorobium vibrioforme subsp. thiosulfatophilum).